Here is a 946-residue protein sequence, read N- to C-terminus: MSELAKFFIEVAEKWQRRWAEAKVFEPSPQPGRPKFFITAAYPYPNGTIHIGHGRTYLVADVMARFRRHLGYNVLFPMAFHYTGTPILTIAEVIAAGDKAVIEEYKEIYGVSDDDIKKMGDPLYLAQYFHRRSKEAMIKFGLGIDWSREFTTIDPEYQRFIQWQFEKLRKRGLIVRGRHPVGWCPRHQMPVGAHDTKDDKEPEIGQWTLIYFVDGEGLVYPTATLRPETVPGVTNIWINPDAEYVVAEFEGRKMVLSKDAAYRLSFQGNVKVIREARGREFVGRRVLNPVTGEWVPVYEAKFVDPKVGTGVVMSVPAHAPYDYAALRDMGEVKLIPLIRVEGYGEYPAKEVVERMGIKSQTDPALEEATREVYSAEYTRGVVREDVVDRIAPHLPEPARSMVRAVFKLYFAGRPVKEAREFISKWLAEAGLGGVMYDIMNKPVYCRCGTEIVVKVLEDQWFINYGERGWKQLARQLVEEMAIIPQEAKAQFLATIDWLDKRACARTRGLGTPLPWSQGWVIESLSDSTIYMAFYTVIKKIRALGLRPEQLTEEFWDYVFLGQGSAAEVAKRIGVDPAALEEIRREFDYWYPLDSRNSGKDLIPNHLTFFIFNHVAIFPREKWPRQIVANGWVLREGEKMSKSKRNVLPLDKAVALYGPDPLRATLAIAAEVEQDLDFRDAEARRNSQQLMSIYNLVQRLAQSAVEREETWLDKWLISEVAHVLERAREAYEKVRLRQAAVELLYNAEAVFSQYLSMVDKPSKSAVEAAKAWVVALEPIVPHFAEELWQILGGEGFAATAPWPKLSPDPAALLAKRYVDMLIEDVKNIPAYKAGAKRVAIYVNGNYQWLRAAVGKDVKAAIEAGAPPQLAKRLVDFAKSMGEEVRGLVERVEQFDEYAALQSYKRYVEKALGVPVDIYKADDPQAPDLGGKKKAALPLKPGIFIEVG.

The 'HIGH' region motif lies at 43–53; it reads PYPNGTIHIGH. The short motif at 638 to 642 is the 'KMSKS' region element; that stretch reads KMSKS. Lys-641 provides a ligand contact to ATP.

This sequence belongs to the class-I aminoacyl-tRNA synthetase family.

Its subcellular location is the cytoplasm. The enzyme catalyses tRNA(Leu) + L-leucine + ATP = L-leucyl-tRNA(Leu) + AMP + diphosphate. The polypeptide is Leucine--tRNA ligase (Pyrobaculum calidifontis (strain DSM 21063 / JCM 11548 / VA1)).